We begin with the raw amino-acid sequence, 966 residues long: Dynamin-like GTPase OPA1, mitochondrial (966 aa).

Residues 1-86 constitute a mitochondrion transit peptide; that stretch reads MLRAGSVVTC…GGHGYQQHRT (86 aa). The Mitochondrial matrix portion of the chain corresponds to 87–95; the sequence is FWVARLAAR. The chain crosses the membrane as a helical span at residues 96–112; that stretch reads LLKLRYILLGSAVGGGY. At 113–776 the chain is on the mitochondrial intermembrane side; sequence TAKKTYDEWK…SVIADMVGPD (664 aa). A disordered region spans residues 189-217; sequence ESALRAPDVPPASAAMADSGDKQFKKSSD. Over residues 207-217 the composition is skewed to basic and acidic residues; the sequence is SGDKQFKKSSD. Residues 213 to 259 are a coiled coil; it reads KKSSDKEKVDQLQEELLRTQLKYQRMLERLEKENKELRKVVLQKDDK. Residues 291–567 form the Dynamin-type G domain; the sequence is QDHLPRVVVV…FWKMVRESVE (277 aa). Residues 301 to 308 are G1 motif; it reads GDQSAGKT. Positions 304, 306, 307, 308, 309, and 323 each coordinate GTP. T308 serves as a coordination point for Mg(2+). Residues 327-330 form a G2 motif region; sequence MMTR. Mg(2+) is bound by residues T329 and D404. A G3 motif region spans residues 404–407; the sequence is DLPG. Residues 473–476 form a G4 motif region; that stretch reads TKVD. GTP contacts are provided by K474, D476, and T509. Positions 507–510 are G5 motif; it reads VVTG. Stalk region stretches follow at residues 595–842 and 880–934; these read DRNE…IKDT and CNDV…VQLI. Residues 742 to 862 are paddle region; that stretch reads TDKPQWDAAI…QKALLHCNLC (121 aa). Residues 777–787 lie within the membrane without spanning it; sequence WKQRWMSWKNR. Topologically, residues 788 to 966 are mitochondrial intermembrane; that stretch reads TPEQHTRNET…AFIEALHKEK (179 aa). C862 and C880 are joined by a disulfide. Positions 901–966 form a coiled coil; sequence RQQLTNTEVR…AFIEALHKEK (66 aa).

The protein belongs to the TRAFAC class dynamin-like GTPase superfamily. Dynamin/Fzo/YdjA family. In terms of assembly, oligomeric complex consisting of membrane-bound and soluble forms of OPA1. Cleaved by OMA1 or YME1L downstream of the transmembrane region in response to different signals to generate soluble forms. Cleaved by OMA1 at position S1 following stress conditions, generating the short soluble form (Dynamin-like GTPase OPA1, short form; S-OPA1).

It is found in the mitochondrion inner membrane. The protein resides in the mitochondrion intermembrane space. The enzyme catalyses GTP + H2O = GDP + phosphate + H(+). Functionally, dynamin-related GTPase that is essential for normal mitochondrial morphology by mediating fusion of the mitochondrial inner membranes, regulating cristae morphology and maintaining respiratory chain function. Exists in two forms: the transmembrane, long form (Dynamin-like GTPase OPA1, long form; L-OPA1), which is tethered to the inner mitochondrial membrane, and the short soluble form (Dynamin-like GTPase OPA1, short form; S-OPA1), which results from proteolytic cleavage and localizes in the intermembrane space. Both forms (L-OPA1 and S-OPA1) cooperate to catalyze the fusion of the mitochondrial inner membrane. The equilibrium between L-OPA1 and S-OPA1 is essential: excess levels of S-OPA1, produced by cleavage by OMA1 following loss of mitochondrial membrane potential, lead to an impaired equilibrium between L-OPA1 and S-OPA1, inhibiting mitochondrial fusion. The balance between L-OPA1 and S-OPA1 also influences cristae shape and morphology. Its role in mitochondrial morphology is required for mitochondrial genome maintenance. Its function is as follows. Constitutes the transmembrane long form (L-OPA1) that plays a central role in mitochondrial inner membrane fusion and cristae morphology. L-OPA1 and the soluble short form (S-OPA1) form higher-order helical assemblies that coordinate the fusion of mitochondrial inner membranes. Inner membrane-anchored L-OPA1 molecules initiate membrane remodeling by recruiting soluble S-OPA1 to rapidly polymerize into a flexible cylindrical scaffold encaging the mitochondrial inner membrane. Once at the membrane surface, the formation of S-OPA1 helices induce bilayer curvature. OPA1 dimerization through the paddle region, which inserts into cardiolipin-containing membrane, promotes GTP hydrolysis and the helical assembly of a flexible OPA1 lattice on the membrane, which drives membrane curvature and mitochondrial fusion. Plays a role in the maintenance and remodeling of mitochondrial cristae, some invaginations of the mitochondrial inner membrane that provide an increase in the surface area. Probably acts by forming helical filaments at the inside of inner membrane tubes with the shape and dimensions of crista junctions. Constitutes the soluble short form (S-OPA1) generated by cleavage by OMA1, which plays a central role in mitochondrial inner membrane fusion and cristae morphology. The transmembrane long form (L-OPA1) and the S-OPA1 form higher-order helical assemblies that coordinate the fusion of mitochondrial inner membranes. Inner membrane-anchored L-OPA1 molecules initiate membrane remodeling by recruiting soluble S-OPA1 to rapidly polymerize into a flexible cylindrical scaffold encaging the mitochondrial inner membrane. Once at the membrane surface, the formation of S-OPA1 helices induce bilayer curvature. OPA1 dimerization through the paddle region, which inserts into cardiolipin-containing membrane, promotes GTP hydrolysis and the helical assembly of a flexible OPA1 lattice on the membrane, which drives membrane curvature and mitochondrial fusion. Excess levels of S-OPA1 produced by cleavage by OMA1 following stress conditions that induce loss of mitochondrial membrane potential, lead to an impaired equilibrium between L-OPA1 and S-OPA1, thereby inhibiting mitochondrial fusion. Plays a role in the maintenance and remodeling of mitochondrial cristae, some invaginations of the mitochondrial inner membrane that provide an increase in the surface area. Probably acts by forming helical filaments at the inside of inner membrane tubes with the shape and dimensions of crista junctions. In Danio rerio (Zebrafish), this protein is Dynamin-like GTPase OPA1, mitochondrial.